The following is a 105-amino-acid chain: MNNIPPIPQLGIYVSKIDPTLRITVTDVDIVDGEDDSPDDELFYLVHWIEGEDESDMTAMGFELDPVEWQAFVESEQLVFERESVHGFNPRKFKLGKDSGFSHED.

This is Protein ORFg in retron Ec67 from Escherichia coli.